A 78-amino-acid chain; its full sequence is RNA-binding protein KhpA (78 aa).

The 50-residue stretch at 29 to 78 (TIIYELSVAKPDIGKIIGKEGRTIKAIRTLLVSVASRNNVRVSLEIMEEK) folds into the KH domain.

Belongs to the KhpA RNA-binding protein family.

The protein resides in the cytoplasm. In terms of biological role, a probable RNA-binding protein. In Chlamydia pneumoniae (Chlamydophila pneumoniae), this protein is RNA-binding protein KhpA.